The following is a 266-amino-acid chain: Large ribosomal subunit protein uL2c (266 aa).

The interval 1–24 (MAIHLYKTSTPSTRNGTVDSQVKS) is disordered. Residues 7-24 (KTSTPSTRNGTVDSQVKS) show a composition bias toward polar residues.

Belongs to the universal ribosomal protein uL2 family. Part of the 50S ribosomal subunit.

It localises to the plastid. It is found in the chloroplast. The protein is Large ribosomal subunit protein uL2c (rpl2) of Nicotiana debneyi (Debney's tobacco).